The primary structure comprises 557 residues: MSENSTFSTEDSSSSSYKPHASNLRRAGKKCSWASYMTNSPTLIVMIGLPARGKTYVSKKLTRYLNWIGVPTKVFNLGVYRREAVKSYKSYDFFRHDNEEAMKIRKQCALVALEDVKAYFTEESGQIAVFDATNTTRERRDMILNFAKQNAFKVFFVESVCDDPDVIAANILEVKVSSPDYPERNRENVMEDFLKRIECYKVTYQPLDPDNYDKDLSFIKVMNVGQRFLVNRVQDYIQSKIVYYLMNIHVHPRTIYLCRHGESEFNLLGKIGGDSGLSLRGKQFAQALKKFLEEQEIQDLKVWTSQLKRTIQTAESLGVTYEQWKILNEIDAGVCEEMTYSEIEQRYPEEFALRDQEKYLYRYPGGESYQDLVQRLEPVIMELERQGNVLVISHQAVMRCLLAYFLDKGADELPYLRCPLHIIFKLTPVAYGCKVETITLNVEAVDTHRDKPTHNFPKSQTPVRMRRNSFTPLSSSNTIRRPRNYSVGSRPLKPLSPLRALDMQEGADQPKTQVQQGSAQATEHLQKALEFANGHREVENVLAKHRRPSMASLTLLS.

Low complexity predominate over residues Met1–Ser16. Residues Met1–Ala21 form a disordered region. Ser2 is subject to N-acetylserine. The tract at residues Ser2–His251 is 6-phosphofructo-2-kinase. Position 32 is a phosphoserine; by PKA (Ser32). Gly48–Tyr56 is an ATP binding site. Residues Arg81 and Arg105 each coordinate beta-D-fructose 6-phosphate. Residue Asp131 is part of the active site. Residues Thr133 and Arg139 each coordinate beta-D-fructose 6-phosphate. Cys161 is an active-site residue. ATP is bound at residue Asn170–Lys175. Beta-D-fructose 6-phosphate contacts are provided by Lys175, Arg196, and Tyr200. The tract at residues Pro252 to Ser557 is fructose-2,6-bisphosphatase. Arg259 serves as a coordination point for beta-D-fructose 2,6-bisphosphate. The active-site Tele-phosphohistidine intermediate is the His260. Asn266 and Gly272 together coordinate beta-D-fructose 2,6-bisphosphate. Residue Glu329 is the Proton donor/acceptor of the active site. Beta-D-fructose 2,6-bisphosphate-binding residues include Tyr340, Arg354, Lys358, Tyr369, Gln395, and Arg399. Phe351–Arg354 contributes to the ATP binding site. Residues Gln395 to Arg399 and Tyr431 each bind ATP. A disordered region spans residues Arg449–Leu495. The segment covering Phe456–Ile479 has biased composition (polar residues). The residue at position 469 (Ser469) is a Phosphoserine. The residue at position 471 (Thr471) is a Phosphothreonine. Phosphothreonine; by PKC is present on Thr478. Residues Ser486 and Ser496 each carry the phosphoserine modification.

The protein in the C-terminal section; belongs to the phosphoglycerate mutase family. In terms of assembly, homodimer. Forms a heterodimer with PFKFB3. Post-translationally, phosphorylation by AMPK stimulates activity.

The enzyme catalyses beta-D-fructose 2,6-bisphosphate + H2O = beta-D-fructose 6-phosphate + phosphate. It carries out the reaction beta-D-fructose 6-phosphate + ATP = beta-D-fructose 2,6-bisphosphate + ADP + H(+). Phosphorylation results in the activation of the kinase activity. Its function is as follows. Synthesis and degradation of fructose 2,6-bisphosphate. In Rattus norvegicus (Rat), this protein is 6-phosphofructo-2-kinase/fructose-2,6-bisphosphatase 2 (Pfkfb2).